The primary structure comprises 476 residues: CDK5 and ABL1 enzyme substrate 2 (476 aa).

The disordered stretch occupies residues methionine 1 to arginine 119. A compositionally biased stretch (basic residues) spans proline 30 to glutamine 40. A compositionally biased stretch (pro residues) spans proline 65–proline 96. 2 positions are modified to phosphoserine: serine 128 and serine 206. The segment at aspartate 256–glycine 295 is disordered. Residues glutamine 263 to proline 272 show a composition bias toward pro residues.

It belongs to the cyclin family. As to quaternary structure, binds to CDK3, CDK5 and ABL1. The C-terminal cyclin-box-like region binds to CDK5. As to expression, widely expressed.

Its function is as follows. Unknown. Probably involved in G1-S cell cycle transition. In Mus musculus (Mouse), this protein is CDK5 and ABL1 enzyme substrate 2 (Cables2).